Here is a 256-residue protein sequence, read N- to C-terminus: Triosephosphate isomerase (256 aa).

Residue 9–11 (NWK) participates in substrate binding. The active-site Electrophile is the His97. Glu169 functions as the Proton acceptor in the catalytic mechanism. Residues Gly175, Ser214, and 235–236 (GG) contribute to the substrate site.

The protein belongs to the triosephosphate isomerase family. As to quaternary structure, homodimer.

It localises to the cytoplasm. It carries out the reaction D-glyceraldehyde 3-phosphate = dihydroxyacetone phosphate. It functions in the pathway carbohydrate biosynthesis; gluconeogenesis. The protein operates within carbohydrate degradation; glycolysis; D-glyceraldehyde 3-phosphate from glycerone phosphate: step 1/1. Its function is as follows. Involved in the gluconeogenesis. Catalyzes stereospecifically the conversion of dihydroxyacetone phosphate (DHAP) to D-glyceraldehyde-3-phosphate (G3P). The polypeptide is Triosephosphate isomerase (Aliivibrio salmonicida (strain LFI1238) (Vibrio salmonicida (strain LFI1238))).